The following is a 732-amino-acid chain: Protein FAR1-RELATED SEQUENCE 4 (732 aa).

One can recognise an FAR1 domain in the interval 11–97 (LFYKDYAKSV…VKEHNHDLLP (87 aa)). Positions 212 to 308 (VVSFETSYFV…CLWHVLDQLP (97 aa)) constitute an MULE domain. Residues 490–526 (YLVDWDEFKSDIYCSCRSFEYKGYLCRHAIVVLQMSG) form an SWIM-type zinc finger. The interval 623–683 (QEENQYGSTS…ETVGEGSQEG (61 aa)) is disordered. A compositionally biased stretch (polar residues) spans 624 to 635 (EENQYGSTSTQI).

It belongs to the FHY3/FAR1 family. Expressed in hypocotyls, rosette and cauline leaves, inflorescences stems, flowers and siliques.

The protein resides in the nucleus. Its function is as follows. Putative transcription activator involved in regulating light control of development. The chain is Protein FAR1-RELATED SEQUENCE 4 (FRS4) from Arabidopsis thaliana (Mouse-ear cress).